A 218-amino-acid polypeptide reads, in one-letter code: UPF0502 protein Geob_1184 (218 aa).

The protein belongs to the UPF0502 family.

The sequence is that of UPF0502 protein Geob_1184 from Geotalea daltonii (strain DSM 22248 / JCM 15807 / FRC-32) (Geobacter daltonii).